Consider the following 1324-residue polypeptide: Tetratricopeptide repeat protein 21 homolog (1324 aa).

TPR repeat units follow at residues 58-91 (PALA…NDVA), 414-446 (SPLY…LVEM), 582-615 (SLYH…PRKE), 669-702 (DQLV…QSNF), 737-770 (PGSY…QSKD), 772-804 (QLAE…YKDK), 806-837 (MRLK…DPEP), 847-880 (IQFL…HSRI), 894-927 (ARIC…HETD), 929-961 (KANL…DPHN), 963-995 (EANS…NPQH), 997-1029 (HALS…NPRC), 1033-1066 (SGYN…AAGW), 1205-1238 (EKCW…NCNC), 1240-1272 (KAFE…TKER), and 1274-1307 (PGFG…NPQY).

Belongs to the TTC21 family. Component of the IFT complex A (IFT-A) composed of at least che-11, daf-10, dyf-2, ift-139, ift-43 and ifta-1. Expressed in ciliated sensory neurons in the head and tail.

The protein localises to the cell projection. It is found in the cilium. It localises to the cytoplasm. Its subcellular location is the cytoskeleton. The protein resides in the cilium basal body. The protein localises to the dendrite. Component of the IFT complex A (IFT-A), a complex required for retrograde ciliary transport. In particular, may act redundantly with the intraflagellar transport protein ift-43 to regulate the transport of specific ciliary cargo proteins such as che-3 which are related to motility. Functions in cilia biogenesis. This is Tetratricopeptide repeat protein 21 homolog from Caenorhabditis elegans.